The following is a 114-amino-acid chain: Notch-regulated ankyrin repeat-containing protein (114 aa).

2 ANK repeats span residues 50-79 and 83-112; these read EGQT…DIRL and DGWS…YSSS.

This sequence belongs to the NRARP family. Forms a ternary complex with the intracellular domain (ICD) of notch1 and rbpj/suh.

Promotes loss of intracellular domain (ICD) of Notch1 in embryos. By down-regulating ICD levels, could function as a negative feedback regulator of Notch signaling that attenuates ICD-mediated transcription. Involved in angiogenesis. May be involved in somitogenesis. The sequence is that of Notch-regulated ankyrin repeat-containing protein (nrarp) from Xenopus laevis (African clawed frog).